Reading from the N-terminus, the 130-residue chain is MVYKVVVSDEDVTYQLELEDKDAKTVNGLKIGEEFNGGVLGLKGYKLRITGGSDKNGFPMKEDVDGTRRFKSLVNGGTGFKPTKKGLRRRKTVRGNTIADDISQINVKVSERGEQTLAEIFAEPEEEQEE.

Belongs to the eukaryotic ribosomal protein eS6 family.

The chain is Small ribosomal subunit protein eS6 from Methanosphaera stadtmanae (strain ATCC 43021 / DSM 3091 / JCM 11832 / MCB-3).